The primary structure comprises 98 residues: Large ribosomal subunit protein eL21 (98 aa).

A disordered region spans residues 1-23 (MVDRKGKGFRRKTRDKLSKHPRQ). Positions 7–23 (KGFRRKTRDKLSKHPRQ) are enriched in basic residues.

The protein belongs to the eukaryotic ribosomal protein eL21 family.

The chain is Large ribosomal subunit protein eL21 from Nanoarchaeum equitans (strain Kin4-M).